A 340-amino-acid polypeptide reads, in one-letter code: Flap endonuclease 1 (340 aa).

Residues 1–98 (MGLNLKDLVV…AEIERRKQIK (98 aa)) are N-domain. Asp27, Asp80, Glu152, Glu154, Asp173, Asp175, and Asp236 together coordinate Mg(2+). An I-domain region spans residues 116–258 (DARKYAQQTT…TALKMIKQHS (143 aa)).

Belongs to the XPG/RAD2 endonuclease family. FEN1 subfamily. As to quaternary structure, interacts with PCNA. PCNA stimulates the nuclease activity without altering cleavage specificity. It depends on Mg(2+) as a cofactor.

Its function is as follows. Structure-specific nuclease with 5'-flap endonuclease and 5'-3' exonuclease activities involved in DNA replication and repair. During DNA replication, cleaves the 5'-overhanging flap structure that is generated by displacement synthesis when DNA polymerase encounters the 5'-end of a downstream Okazaki fragment. Binds the unpaired 3'-DNA end and kinks the DNA to facilitate 5' cleavage specificity. Cleaves one nucleotide into the double-stranded DNA from the junction in flap DNA, leaving a nick for ligation. Also involved in the base excision repair (BER) pathway. Acts as a genome stabilization factor that prevents flaps from equilibrating into structures that lead to duplications and deletions. Also possesses 5'-3' exonuclease activity on nicked or gapped double-stranded DNA. In Nitrosopumilus maritimus (strain SCM1), this protein is Flap endonuclease 1.